Consider the following 229-residue polypeptide: Cytidylate kinase (229 aa).

12–20 lines the ATP pocket; the sequence is GPSGSGKGT.

This sequence belongs to the cytidylate kinase family. Type 1 subfamily.

It is found in the cytoplasm. The enzyme catalyses CMP + ATP = CDP + ADP. It carries out the reaction dCMP + ATP = dCDP + ADP. The chain is Cytidylate kinase from Azotobacter vinelandii (strain DJ / ATCC BAA-1303).